Consider the following 217-residue polypeptide: Monomethylamine corrinoid protein 2 (217 aa).

The B12-binding N-terminal domain occupies 1–91 (MTNTEIFDKL…ELEKNKKEGD (91 aa)). The B12-binding domain maps to 93–217 (AGLAITFVAE…AAKVALEVMK (125 aa)). His-106 is a binding site for methylcob(III)alamin.

It belongs to the methylamine corrinoid protein family. Can form a complex with MtmB.

Its pathway is one-carbon metabolism; methanogenesis from methylamine. In terms of biological role, acts as a methyl group carrier between MtmB and MtbA. This is Monomethylamine corrinoid protein 2 (mtmC2) from Methanosarcina barkeri.